The primary structure comprises 419 residues: MRCLLVGGAVRDQLLGRPVGDRDWVVVGATPEQMVAAGYLPVGRDFPVFLHPRTHEEYALARTERKTAPGYHGFVFHTGADVSLDDDLARRDLTINAMALDEAGTLIDPWGGRRDLAHKCLRHVGAAFAEDPVRILRLARFAARLGDFSVAPETLALCRRMVEAGEVDALVPERVWQELSRGLMEARPSRMFEVLRDCGALARLLPEVERLFGVPQRADYHPEVDTGVHLMMVLDTAAQRGVSLPVRYACLGHDLGKGTTPAHILPRHIGHEGRSAALLAPMSARLKVPAACHELADLVAREHSNVHGSGNFDAAALVRLFDRCDAWRRPERFELALQACECDARGRLGFEQAHYPQAPRLRQALAAARGIDAAAVMASARARGLNGPALGRALHEARIEAVASDPACQRPADQAQQNG.

ATP contacts are provided by Gly8 and Arg11. The CTP site is built by Gly8 and Arg11. Asp21 and Asp23 together coordinate Mg(2+). ATP is bound by residues Arg91, Arg137, and Arg140. CTP-binding residues include Arg91, Arg137, and Arg140. One can recognise an HD domain in the interval 226–327 (TGVHLMMVLD…VRLFDRCDAW (102 aa)).

This sequence belongs to the tRNA nucleotidyltransferase/poly(A) polymerase family. Bacterial CCA-adding enzyme type 1 subfamily. As to quaternary structure, monomer. Can also form homodimers and oligomers. Mg(2+) is required as a cofactor. It depends on Ni(2+) as a cofactor.

The enzyme catalyses a tRNA precursor + 2 CTP + ATP = a tRNA with a 3' CCA end + 3 diphosphate. The catalysed reaction is a tRNA with a 3' CCA end + 2 CTP + ATP = a tRNA with a 3' CCACCA end + 3 diphosphate. Its function is as follows. Catalyzes the addition and repair of the essential 3'-terminal CCA sequence in tRNAs without using a nucleic acid template. Adds these three nucleotides in the order of C, C, and A to the tRNA nucleotide-73, using CTP and ATP as substrates and producing inorganic pyrophosphate. tRNA 3'-terminal CCA addition is required both for tRNA processing and repair. Also involved in tRNA surveillance by mediating tandem CCA addition to generate a CCACCA at the 3' terminus of unstable tRNAs. While stable tRNAs receive only 3'-terminal CCA, unstable tRNAs are marked with CCACCA and rapidly degraded. The chain is Multifunctional CCA protein from Leptothrix cholodnii (strain ATCC 51168 / LMG 8142 / SP-6) (Leptothrix discophora (strain SP-6)).